A 213-amino-acid polypeptide reads, in one-letter code: Ribosomal RNA small subunit methyltransferase G (213 aa).

Residues Gly72, Phe77, 125–126 (IE), and Arg141 each bind S-adenosyl-L-methionine.

The protein belongs to the methyltransferase superfamily. RNA methyltransferase RsmG family.

It localises to the cytoplasm. The enzyme catalyses guanosine(527) in 16S rRNA + S-adenosyl-L-methionine = N(7)-methylguanosine(527) in 16S rRNA + S-adenosyl-L-homocysteine. Functionally, specifically methylates the N7 position of guanine in position 527 of 16S rRNA. This Sinorhizobium medicae (strain WSM419) (Ensifer medicae) protein is Ribosomal RNA small subunit methyltransferase G.